The chain runs to 608 residues: FAD-binding monooxygenase ktnD (608 aa).

N-linked (GlcNAc...) asparagine glycosylation occurs at asparagine 4. Residues 17–37 (ATVVIIGAGVSGMCMAIDLLH) form a helical membrane-spanning segment. Residues 56–59 (TWAN), 68–69 (DV), and tyrosine 74 each bind FAD. 66 to 68 (ASD) is an NADP(+) binding site. Asparagine 114 is a glycosylation site (N-linked (GlcNAc...) asparagine). Residues 201–207 (NGASAIQ) and 224–225 (RS) each bind NADP(+). Asparagine 325 carries an N-linked (GlcNAc...) asparagine glycan. The helical transmembrane segment at 535–555 (ALVSNVTLFLGVALAAGGVYW) threads the bilayer.

It belongs to the FAD-binding monooxygenase family. FAD serves as cofactor.

Its subcellular location is the membrane. Functionally, non-reducing polyketide synthase; part of the gene cluster that mediates the biosynthesis of the bicoumarin kotanin. The non-reducing polyketide synthase ktnS first catalyzes the formation of the pentaketidic 4,7-dihydroxy-5-methylcoumarin from acetyl coenzyme A and 4 malonyl coenzyme A molecules. Further O-methylation by ktnB leads to the formation of 7-demethylsiderin. Then, an oxidative phenol coupling catalyzed by the cytochrome P450 monooxygenase ktnC forms the 8,8'-dimer P-orlandin via dimerization the monomeric precursor, 7-demethylsiderin. P-orlandin is subsequently O-methylated in a stepwise fashion to demethylkotanin and kotanin. The function of ktnD within the pathway has not been determined yet. The sequence is that of FAD-binding monooxygenase ktnD from Aspergillus niger (strain ATCC MYA-4892 / CBS 513.88 / FGSC A1513).